Reading from the N-terminus, the 254-residue chain is 5-oxoprolinase subunit A (254 aa).

The protein belongs to the LamB/PxpA family. In terms of assembly, forms a complex composed of PxpA, PxpB and PxpC.

The enzyme catalyses 5-oxo-L-proline + ATP + 2 H2O = L-glutamate + ADP + phosphate + H(+). Its function is as follows. Catalyzes the cleavage of 5-oxoproline to form L-glutamate coupled to the hydrolysis of ATP to ADP and inorganic phosphate. This is 5-oxoprolinase subunit A from Gluconobacter oxydans (strain 621H) (Gluconobacter suboxydans).